We begin with the raw amino-acid sequence, 326 residues long: Malate dehydrogenase (326 aa).

11 to 17 serves as a coordination point for NAD(+); that stretch reads GAAGQIG. Residues R92 and R98 each contribute to the substrate site. Residues N105, Q112, and 129–131 contribute to the NAD(+) site; that span reads VGN. Positions 131 and 162 each coordinate substrate. The Proton acceptor role is filled by H187.

Belongs to the LDH/MDH superfamily. MDH type 2 family.

It catalyses the reaction (S)-malate + NAD(+) = oxaloacetate + NADH + H(+). Catalyzes the reversible oxidation of malate to oxaloacetate. The sequence is that of Malate dehydrogenase from Halorhodospira halophila (strain DSM 244 / SL1) (Ectothiorhodospira halophila (strain DSM 244 / SL1)).